The chain runs to 547 residues: CAP-Gly domain-containing linker protein 3 (547 aa).

Residues 1–49 form a disordered region; sequence MTKTDPAPMAPPPRGEEEEEEEEDEPVPEAPSPTQERRQKPVVHPSAPA. The span at 16-27 shows a compositional bias: acidic residues; that stretch reads EEEEEEEEDEPV. ANK repeat units follow at residues 117–158, 160–191, and 197–229; these read TDMT…LRSR, TNMNALHYAAYFDVPDLVRVLLKGARPRVVNS, and NHGSALHIAASSLCLGAAKCLLEHGANPALRNR. The CAP-Gly 1 domain occupies 314 to 356; that stretch reads GTTEFASGQWVGVELDEPEGKNDGSVGGVRYFICPPKQGLFAS. Positions 365-413 are disordered; it reads DAPPSSVTSTPRTPRMDFSRVTGKGRREHKGKKKTPSSPSLGSLQQRDG. Over residues 367–377 the composition is skewed to low complexity; it reads PPSSVTSTPRT. The residue at position 374 (Thr374) is a Phosphothreonine. A compositionally biased stretch (basic residues) spans 387–399; the sequence is GKGRREHKGKKKT. Residues 400–410 show a composition bias toward polar residues; that stretch reads PSSPSLGSLQQ. Ser401 is subject to Phosphoserine. Residues 436–478 enclose the CAP-Gly 2 domain; that stretch reads GKTDFAPGYWYGIELDQPTGKHDGSVFGVRYFTCPPRHGVFAP. The goLD stretch occupies residues 488–547; the sequence is STDSPGDSVGAKKVHQVTMTQPKRTFTTVRTPKDIASENSISRLLFCCWFPWMLRAEMQS. Residues Cys534 and Cys535 are each lipidated (S-palmitoyl cysteine).

In terms of assembly, homodimer. Interacts with AKT1 and AKT2; when AKT1 and AKT2 are phosphorylated and activated, affinity is higher for AKT2. Interacts with ZDHHC13 (via ANK repeats). Interacts with ZDHHC17 (via ANK repeats). Palmitoylation by ZDHHC17 regulates association with the plasma membrane.

It is found in the cell membrane. The protein resides in the cytoplasm. The protein localises to the golgi apparatus. It localises to the golgi stack. Functions as a cytoplasmic linker protein. Involved in TGN-endosome dynamics. May modulate the cellular compartmentalization of AKT kinase family and promote its cell membrane localization, thereby playing a role in glucose transport in adipocytes. This is CAP-Gly domain-containing linker protein 3 (CLIP3) from Homo sapiens (Human).